Reading from the N-terminus, the 220-residue chain is Probable septum site-determining protein MinC (220 aa).

It belongs to the MinC family. In terms of assembly, interacts with MinD and FtsZ.

Functionally, cell division inhibitor that blocks the formation of polar Z ring septums. Rapidly oscillates between the poles of the cell to destabilize FtsZ filaments that have formed before they mature into polar Z rings. Prevents FtsZ polymerization. This is Probable septum site-determining protein MinC from Prochlorococcus marinus subsp. pastoris (strain CCMP1986 / NIES-2087 / MED4).